Reading from the N-terminus, the 106-residue chain is Ribosomal protein eL42-like (106 aa).

Residues 26–53 (YKKGKDSLYAQGRRRYDRKQSGYGGQTK) form a disordered region. Lys53 is modified (N6-methyllysine).

The protein belongs to the eukaryotic ribosomal protein eL42 family. In terms of tissue distribution, ubiquitously expressed.

Its subcellular location is the cytoplasm. This is Ribosomal protein eL42-like (RPL36AL) from Homo sapiens (Human).